A 118-amino-acid polypeptide reads, in one-letter code: Large ribosomal subunit protein bL20 (118 aa).

Belongs to the bacterial ribosomal protein bL20 family.

Binds directly to 23S ribosomal RNA and is necessary for the in vitro assembly process of the 50S ribosomal subunit. It is not involved in the protein synthesizing functions of that subunit. This chain is Large ribosomal subunit protein bL20, found in Thermotoga petrophila (strain ATCC BAA-488 / DSM 13995 / JCM 10881 / RKU-1).